The chain runs to 304 residues: Aspartate carbamoyltransferase catalytic subunit (304 aa).

Carbamoyl phosphate contacts are provided by Arg-57 and Thr-58. Position 85 (Lys-85) interacts with L-aspartate. Carbamoyl phosphate contacts are provided by Arg-107, His-134, and Gln-137. The L-aspartate site is built by Arg-167 and Arg-216. Residues Ala-260 and Pro-261 each coordinate carbamoyl phosphate.

Belongs to the aspartate/ornithine carbamoyltransferase superfamily. ATCase family. Heterododecamer (2C3:3R2) of six catalytic PyrB chains organized as two trimers (C3), and six regulatory PyrI chains organized as three dimers (R2).

The catalysed reaction is carbamoyl phosphate + L-aspartate = N-carbamoyl-L-aspartate + phosphate + H(+). It participates in pyrimidine metabolism; UMP biosynthesis via de novo pathway; (S)-dihydroorotate from bicarbonate: step 2/3. Catalyzes the condensation of carbamoyl phosphate and aspartate to form carbamoyl aspartate and inorganic phosphate, the committed step in the de novo pyrimidine nucleotide biosynthesis pathway. The polypeptide is Aspartate carbamoyltransferase catalytic subunit (Fusobacterium nucleatum subsp. nucleatum (strain ATCC 25586 / DSM 15643 / BCRC 10681 / CIP 101130 / JCM 8532 / KCTC 2640 / LMG 13131 / VPI 4355)).